The primary structure comprises 488 residues: Inosine-5'-monophosphate dehydrogenase (488 aa).

CBS domains lie at 95-153 (VISN…SIKI) and 157-216 (MTKD…AKDE). NAD(+) is bound by residues Asp250 and 300–302 (GIG). Residues Gly302 and Gly304 each coordinate K(+). Ser305 contacts IMP. Residue Cys307 coordinates K(+). Cys307 acts as the Thioimidate intermediate in catalysis. Residues 340 to 342 (DGG), 363 to 364 (GS), and 387 to 391 (YRGMG) each bind IMP. Arg403 acts as the Proton acceptor in catalysis. Residue Glu417 coordinates IMP. The interval 467–488 (AGLAESHPHNVQITKESPNYSF) is disordered. Positions 471, 472, and 473 each coordinate K(+). The span at 475–488 (HNVQITKESPNYSF) shows a compositional bias: polar residues.

The protein belongs to the IMPDH/GMPR family. Homotetramer. It depends on K(+) as a cofactor.

It catalyses the reaction IMP + NAD(+) + H2O = XMP + NADH + H(+). It participates in purine metabolism; XMP biosynthesis via de novo pathway; XMP from IMP: step 1/1. Its activity is regulated as follows. Mycophenolic acid (MPA) is a non-competitive inhibitor that prevents formation of the closed enzyme conformation by binding to the same site as the amobile flap. In contrast, mizoribine monophosphate (MZP) is a competitive inhibitor that induces the closed conformation. MPA is a potent inhibitor of mammalian IMPDHs but a poor inhibitor of the bacterial enzymes. MZP is a more potent inhibitor of bacterial IMPDH. Functionally, catalyzes the conversion of inosine 5'-phosphate (IMP) to xanthosine 5'-phosphate (XMP), the first committed and rate-limiting step in the de novo synthesis of guanine nucleotides, and therefore plays an important role in the regulation of cell growth. The sequence is that of Inosine-5'-monophosphate dehydrogenase from Staphylococcus epidermidis (strain ATCC 35984 / DSM 28319 / BCRC 17069 / CCUG 31568 / BM 3577 / RP62A).